Reading from the N-terminus, the 368-residue chain is 1-deoxy-D-xylulose 5-phosphate reductoisomerase (368 aa).

NADPH contacts are provided by threonine 10, glycine 11, serine 12, isoleucine 13, glutamine 38, and asparagine 100. Residue lysine 101 participates in 1-deoxy-D-xylulose 5-phosphate binding. NADPH is bound at residue glutamate 102. Aspartate 125 is a binding site for Mn(2+). 1-deoxy-D-xylulose 5-phosphate is bound by residues serine 126, glutamate 127, serine 151, and histidine 172. Mn(2+) is bound at residue glutamate 127. Residue glycine 178 participates in NADPH binding. 1-deoxy-D-xylulose 5-phosphate contacts are provided by serine 185, asparagine 190, lysine 191, and glutamate 194. Glutamate 194 lines the Mn(2+) pocket.

Belongs to the DXR family. The cofactor is Mg(2+). Mn(2+) serves as cofactor.

The enzyme catalyses 2-C-methyl-D-erythritol 4-phosphate + NADP(+) = 1-deoxy-D-xylulose 5-phosphate + NADPH + H(+). It functions in the pathway isoprenoid biosynthesis; isopentenyl diphosphate biosynthesis via DXP pathway; isopentenyl diphosphate from 1-deoxy-D-xylulose 5-phosphate: step 1/6. Functionally, catalyzes the NADPH-dependent rearrangement and reduction of 1-deoxy-D-xylulose-5-phosphate (DXP) to 2-C-methyl-D-erythritol 4-phosphate (MEP). This is 1-deoxy-D-xylulose 5-phosphate reductoisomerase from Tropheryma whipplei (strain TW08/27) (Whipple's bacillus).